Here is a 451-residue protein sequence, read N- to C-terminus: ADP-specific phosphofructokinase (451 aa).

Residues 1–450 form the ADPK domain; the sequence is MSVPQDVSIF…FITYVNYLKR (450 aa). 3 residues coordinate Mg(2+): Glu261, Glu291, and Asp434. Asp434 (proton acceptor) is an active-site residue.

Belongs to the carbohydrate kinase PfkC family. Requires Mg(2+) as cofactor.

The protein localises to the cytoplasm. The catalysed reaction is beta-D-fructose 6-phosphate + ADP = beta-D-fructose 1,6-bisphosphate + AMP + H(+). It participates in carbohydrate degradation; glycolysis. Catalyzes the phosphorylation of fructose 6-phosphate to fructose 1,6-bisphosphate using ADP as the phosphate donor. This Pyrococcus abyssi (strain GE5 / Orsay) protein is ADP-specific phosphofructokinase.